Consider the following 179-residue polypeptide: Adenine phosphoribosyltransferase (179 aa).

It belongs to the purine/pyrimidine phosphoribosyltransferase family. Homodimer.

Its subcellular location is the cytoplasm. The enzyme catalyses AMP + diphosphate = 5-phospho-alpha-D-ribose 1-diphosphate + adenine. It functions in the pathway purine metabolism; AMP biosynthesis via salvage pathway; AMP from adenine: step 1/1. Its function is as follows. Catalyzes a salvage reaction resulting in the formation of AMP, that is energically less costly than de novo synthesis. The polypeptide is Adenine phosphoribosyltransferase (Ruegeria pomeroyi (strain ATCC 700808 / DSM 15171 / DSS-3) (Silicibacter pomeroyi)).